The following is a 769-amino-acid chain: Multiple C2 domain and transmembrane region protein 5 (769 aa).

C2 domains are found at residues 23-143 (SVTG…PQWY), 184-305 (PEGV…SRWF), and 345-467 (YSSD…THSY). 5 residues coordinate Ca(2+): Asp-56, Asp-62, Asp-109, Asp-111, and Asp-116. The next 2 membrane-spanning stretches (helical) occupy residues 604 to 624 (IILVLYPELILPTVFLYLFLI) and 712 to 732 (LFVLFCLIAAIVLYVTPFQVV).

The protein belongs to the MCTP family. Ca(2+) serves as cofactor. Highly expressed in roots meristems and shoot apical meristems (SAMs). Observed in flowers.

It is found in the endoplasmic reticulum membrane. May function as a signaling molecule by regulating the trafficking of other regulators. The polypeptide is Multiple C2 domain and transmembrane region protein 5 (Arabidopsis thaliana (Mouse-ear cress)).